The primary structure comprises 168 residues: Alpha-amylase/trypsin inhibitor CM3 (168 aa).

The first 25 residues, 1–25 (MACKSSCSLLLLAAVLLSVLAAASA), serve as a signal peptide directing secretion.

It belongs to the protease inhibitor I6 (cereal trypsin/alpha-amylase inhibitor) family. Subunit of the tetrameric inhibitor. Five disulfide bonds, which are essential for the inhibitor activity, are probably present. In terms of tissue distribution, developing endosperm.

Its subcellular location is the secreted. In terms of biological role, alpha-amylase/trypsin inhibitor. It could be involved in insect defense mechanisms. This is Alpha-amylase/trypsin inhibitor CM3 from Triticum aestivum (Wheat).